Consider the following 461-residue polypeptide: Bifunctional protein GlmU (461 aa).

The tract at residues 1–236 is pyrophosphorylase; sequence MNVLLQELFI…VFEIFGINNR (236 aa). UDP-N-acetyl-alpha-D-glucosamine is bound by residues lysine 27, glutamine 80, 85-86, 109-111, glycine 146, glutamate 160, asparagine 175, and asparagine 234; these read GT and YGD. Residue aspartate 111 coordinates Mg(2+). Residue asparagine 234 participates in Mg(2+) binding. The tract at residues 237 to 257 is linker; it reads FQLMKLEKIYQIEQAKKLLLN. The interval 258 to 461 is N-acetyltransferase; it reads GVTLSDYNRF…SILRKENNSK (204 aa). A UDP-N-acetyl-alpha-D-glucosamine-binding site is contributed by lysine 358. Histidine 370 (proton acceptor) is an active-site residue. UDP-N-acetyl-alpha-D-glucosamine is bound by residues tyrosine 373 and asparagine 384. Positions 387, 430, and 447 each coordinate acetyl-CoA.

It in the N-terminal section; belongs to the N-acetylglucosamine-1-phosphate uridyltransferase family. The protein in the C-terminal section; belongs to the transferase hexapeptide repeat family. Homotrimer. It depends on Mg(2+) as a cofactor.

The protein resides in the cytoplasm. It carries out the reaction alpha-D-glucosamine 1-phosphate + acetyl-CoA = N-acetyl-alpha-D-glucosamine 1-phosphate + CoA + H(+). The catalysed reaction is N-acetyl-alpha-D-glucosamine 1-phosphate + UTP + H(+) = UDP-N-acetyl-alpha-D-glucosamine + diphosphate. The protein operates within nucleotide-sugar biosynthesis; UDP-N-acetyl-alpha-D-glucosamine biosynthesis; N-acetyl-alpha-D-glucosamine 1-phosphate from alpha-D-glucosamine 6-phosphate (route II): step 2/2. It participates in nucleotide-sugar biosynthesis; UDP-N-acetyl-alpha-D-glucosamine biosynthesis; UDP-N-acetyl-alpha-D-glucosamine from N-acetyl-alpha-D-glucosamine 1-phosphate: step 1/1. It functions in the pathway bacterial outer membrane biogenesis; LPS lipid A biosynthesis. Its function is as follows. Catalyzes the last two sequential reactions in the de novo biosynthetic pathway for UDP-N-acetylglucosamine (UDP-GlcNAc). The C-terminal domain catalyzes the transfer of acetyl group from acetyl coenzyme A to glucosamine-1-phosphate (GlcN-1-P) to produce N-acetylglucosamine-1-phosphate (GlcNAc-1-P), which is converted into UDP-GlcNAc by the transfer of uridine 5-monophosphate (from uridine 5-triphosphate), a reaction catalyzed by the N-terminal domain. This chain is Bifunctional protein GlmU, found in Wigglesworthia glossinidia brevipalpis.